Reading from the N-terminus, the 101-residue chain is uncharacterized protein (101 aa).

The chain crosses the membrane as a helical span at residues 72 to 94 (ILCPSFLNYSFINIYCFGPYTMV).

It is found in the membrane. This is an uncharacterized protein from Schizosaccharomyces pombe (strain 972 / ATCC 24843) (Fission yeast).